We begin with the raw amino-acid sequence, 473 residues long: Pentatricopeptide repeat-containing protein At3g60050 (473 aa).

PPR repeat units lie at residues 148–182 (TVNS…GFPT), 183–217 (TART…NYRP), 218–252 (FKHS…GFSP), 253–287 (DVLT…GFSP), 288–322 (DSYT…GIDP), 323–357 (SVLH…GCRP), 358–392 (DVVC…GQLP), 393–427 (NVFT…GCNP), and 428–462 (NFVV…GHYV).

It belongs to the PPR family. P subfamily.

In Arabidopsis thaliana (Mouse-ear cress), this protein is Pentatricopeptide repeat-containing protein At3g60050.